The following is a 26-amino-acid chain: M-poneritoxin-Ng1d (26 aa).

Expressed by the venom gland.

It localises to the secreted. The protein resides in the target cell membrane. In terms of biological role, has a broad spectrum of activity against both Gram-positive and Gram-negative bacteria and S.cerevisiae. Has insecticidal and hemolytic activities. May act by disrupting the integrity of the bacterial cell membrane. This is M-poneritoxin-Ng1d from Neoponera goeldii (Ponerine ant).